The primary structure comprises 381 residues: GDP-mannose-dependent alpha-(1-6)-phosphatidylinositol dimannoside mannosyltransferase (381 aa).

Substrate-binding positions include glycine 16, arginine 207, 211–212 (EK), 283–287 (ETFGL), and glutamate 291.

It belongs to the glycosyltransferase group 1 family. Glycosyltransferase 4 subfamily.

Its pathway is phospholipid metabolism; phosphatidylinositol metabolism. Catalyzes the addition of a mannose residue from GDP-D-mannose to the position 6 of the alpha-1,6-linked mannose residue of the triacyl phosphatidylinositol dimannoside (Ac3PIM2) to generate triacyl phosphatidylinositol trimannoside (Ac3PIM3). This is GDP-mannose-dependent alpha-(1-6)-phosphatidylinositol dimannoside mannosyltransferase (pimC) from Mycobacterium tuberculosis (strain ATCC 25177 / H37Ra).